Reading from the N-terminus, the 403-residue chain is MDKLSIKDLSPEGKKVLVRVDFNVPIKDGKILDDVRIRSAMPTINYLLKRDAAIILVSHLGRPKGDMFEEAYSLAPIVPVLEGYLGHHVPLSPDCVGEVARQAVAQLSPGRVLLLENVRFHRGEEHPEEDPSFAVELAAYADFYVNDAFGTSHRKHASVYRVPQMFPDRAAAGFLMEKELEFLGQHLLVEPKRPFTAILGGAKVSSKIGVIEALLSRVDNLVLAGGMGYTFLKAMNQQVGNSLVEETGIPLAKRVLEKARTQGVKIYLPVDAKVARRCETGEDWQELSIQEGIPEGFSGFDIGSKTIALFSEVIQDSATVFWNGPVGVYEVPPFDQGSKAIAQCLASHSSAVTVVGGGDAAAVVALAGCTSQISHVSTGGGASLEFLEKGYLPGTEILSPARS.

Residues 21-23 (DFN), Arg36, 59-62 (HLGR), Arg119, and Arg154 each bind substrate. ATP is bound by residues Lys207, Gly299, Glu330, and 357–360 (GGDA).

Belongs to the phosphoglycerate kinase family. In terms of assembly, monomer.

It localises to the cytoplasm. The catalysed reaction is (2R)-3-phosphoglycerate + ATP = (2R)-3-phospho-glyceroyl phosphate + ADP. It functions in the pathway carbohydrate degradation; glycolysis; pyruvate from D-glyceraldehyde 3-phosphate: step 2/5. In Chlamydia muridarum (strain MoPn / Nigg), this protein is Phosphoglycerate kinase (pgk).